A 61-amino-acid chain; its full sequence is Small ribosomal subunit protein uS14 (61 aa).

Residues cysteine 24, cysteine 27, cysteine 40, and cysteine 43 each coordinate Zn(2+).

Belongs to the universal ribosomal protein uS14 family. Zinc-binding uS14 subfamily. As to quaternary structure, part of the 30S ribosomal subunit. Contacts proteins S3 and S10. It depends on Zn(2+) as a cofactor.

Functionally, binds 16S rRNA, required for the assembly of 30S particles and may also be responsible for determining the conformation of the 16S rRNA at the A site. The chain is Small ribosomal subunit protein uS14 from Geobacter sp. (strain M21).